A 66-amino-acid chain; its full sequence is Large ribosomal subunit protein bL35 (66 aa).

Over residues 1 to 44 the composition is skewed to basic residues; sequence MPKLKSHRGAAKRFRKTASGAIKRRGAYRNHILTKKSTKQKRHL. Residues 1-48 are disordered; it reads MPKLKSHRGAAKRFRKTASGAIKRRGAYRNHILTKKSTKQKRHLRVEA.

The protein belongs to the bacterial ribosomal protein bL35 family.

In Legionella pneumophila (strain Corby), this protein is Large ribosomal subunit protein bL35.